Here is a 539-residue protein sequence, read N- to C-terminus: Propionyl-CoA carboxylase beta chain, mitochondrial (539 aa).

Residues 1 to 28 (MAAAVRVTAARARLRVVVRSLHAGVRSL) constitute a mitochondrion transit peptide. Residues 32–290 (PVSVNERIEN…SNQDPAPIRE (259 aa)) form the CoA carboxyltransferase N-terminal domain. Residues 32–533 (PVSVNERIEN…SKKVQRPWRK (502 aa)) form a carboxyltransferase region. S71 bears the Phosphoserine mark. Residue K99 is modified to N6-acetyllysine; alternate. K99 carries the N6-succinyllysine; alternate modification. Residues 294–533 (PSDRLVPELD…SKKVQRPWRK (240 aa)) form the CoA carboxyltransferase C-terminal domain. Residues 325 to 358 (DERDFFEIMPNYAKNIIVGFARMNGRTVGIVGNQ) are acyl-CoA binding. K474 and K489 each carry N6-acetyllysine; alternate. 2 positions are modified to N6-succinyllysine; alternate: K474 and K489.

The protein belongs to the AccD/PCCB family. As to quaternary structure, the holoenzyme is a dodecamer composed of 6 PCCA/alpha subunits and 6 PCCB/beta subunits.

It is found in the mitochondrion matrix. It carries out the reaction propanoyl-CoA + hydrogencarbonate + ATP = (S)-methylmalonyl-CoA + ADP + phosphate + H(+). The catalysed reaction is butanoyl-CoA + hydrogencarbonate + ATP = (2S)-ethylmalonyl-CoA + ADP + phosphate + H(+). It participates in metabolic intermediate metabolism; propanoyl-CoA degradation; succinyl-CoA from propanoyl-CoA: step 1/3. Functionally, this is one of the 2 subunits of the biotin-dependent propionyl-CoA carboxylase (PCC), a mitochondrial enzyme involved in the catabolism of odd chain fatty acids, branched-chain amino acids isoleucine, threonine, methionine, and valine and other metabolites. Propionyl-CoA carboxylase catalyzes the carboxylation of propionyl-CoA/propanoyl-CoA to D-methylmalonyl-CoA/(S)-methylmalonyl-CoA. Within the holoenzyme, the alpha subunit catalyzes the ATP-dependent carboxylation of the biotin carried by the biotin carboxyl carrier (BCC) domain, while the beta subunit then transfers the carboxyl group from carboxylated biotin to propionyl-CoA. Propionyl-CoA carboxylase also significantly acts on butyryl-CoA/butanoyl-CoA, which is converted to ethylmalonyl-CoA/(2S)-ethylmalonyl-CoA at a much lower rate. Other alternative minor substrates include (2E)-butenoyl-CoA/crotonoyl-CoA. The chain is Propionyl-CoA carboxylase beta chain, mitochondrial from Sus scrofa (Pig).